The chain runs to 827 residues: Leucine--tRNA ligase (827 aa).

The 'HIGH' region signature appears at 42–52 (PYPSGKLHMGH). The short motif at 581–585 (KMSKS) is the 'KMSKS' region element. K584 serves as a coordination point for ATP.

This sequence belongs to the class-I aminoacyl-tRNA synthetase family.

The protein resides in the cytoplasm. It catalyses the reaction tRNA(Leu) + L-leucine + ATP = L-leucyl-tRNA(Leu) + AMP + diphosphate. This Desulforamulus reducens (strain ATCC BAA-1160 / DSM 100696 / MI-1) (Desulfotomaculum reducens) protein is Leucine--tRNA ligase.